A 473-amino-acid polypeptide reads, in one-letter code: GTPase Der (473 aa).

EngA-type G domains follow at residues 3 to 166 (PVIA…ENPE) and 177 to 350 (IRIG…ESAM). GTP is bound by residues 9–16 (GRPNVGKS), 56–60 (DTGGL), 118–121 (NKTD), 183–190 (GRPNVGKS), 230–234 (DTAGV), and 295–298 (NKWD). Positions 351–435 (SKWPTNRLTA…PIRFEFKSGE (85 aa)) constitute a KH-like domain. Over residues 444 to 458 (RLTPRQKVKKDNDLK) the composition is skewed to basic and acidic residues. A disordered region spans residues 444–473 (RLTPRQKVKKDNDLKKGRRIKKTRQKSVKR). Over residues 459–473 (KGRRIKKTRQKSVKR) the composition is skewed to basic residues.

The protein belongs to the TRAFAC class TrmE-Era-EngA-EngB-Septin-like GTPase superfamily. EngA (Der) GTPase family. As to quaternary structure, associates with the 50S ribosomal subunit.

Its function is as follows. GTPase that plays an essential role in the late steps of ribosome biogenesis. This chain is GTPase Der, found in Marinobacter nauticus (strain ATCC 700491 / DSM 11845 / VT8) (Marinobacter aquaeolei).